The primary structure comprises 59 residues: Large ribosomal subunit protein bL32c (59 aa).

Positions 37-59 (SRSFSSGNEHPKPKGFSGQQANK) are disordered.

It belongs to the bacterial ribosomal protein bL32 family.

Its subcellular location is the plastid. It is found in the chloroplast. This Saccharum hybrid (Sugarcane) protein is Large ribosomal subunit protein bL32c.